The primary structure comprises 433 residues: Trigger factor (433 aa).

Residues 163 to 248 (GDVVVLDFAA…VHAVKERRLP (86 aa)) enclose the PPIase FKBP-type domain.

It belongs to the FKBP-type PPIase family. Tig subfamily.

It localises to the cytoplasm. It carries out the reaction [protein]-peptidylproline (omega=180) = [protein]-peptidylproline (omega=0). Its function is as follows. Involved in protein export. Acts as a chaperone by maintaining the newly synthesized protein in an open conformation. Functions as a peptidyl-prolyl cis-trans isomerase. The protein is Trigger factor of Nitratidesulfovibrio vulgaris (strain DP4) (Desulfovibrio vulgaris).